Consider the following 694-residue polypeptide: Elongation factor G (694 aa).

Residues 12 to 286 form the tr-type G domain; it reads SKLRNIGIMA…AVVDYLPSPI (275 aa). GTP is bound by residues 21–28, 85–89, and 139–142; these read AHIDAGKT, DTPGH, and NKMD.

It belongs to the TRAFAC class translation factor GTPase superfamily. Classic translation factor GTPase family. EF-G/EF-2 subfamily.

The protein localises to the cytoplasm. Functionally, catalyzes the GTP-dependent ribosomal translocation step during translation elongation. During this step, the ribosome changes from the pre-translocational (PRE) to the post-translocational (POST) state as the newly formed A-site-bound peptidyl-tRNA and P-site-bound deacylated tRNA move to the P and E sites, respectively. Catalyzes the coordinated movement of the two tRNA molecules, the mRNA and conformational changes in the ribosome. The polypeptide is Elongation factor G (Pseudothermotoga lettingae (strain ATCC BAA-301 / DSM 14385 / NBRC 107922 / TMO) (Thermotoga lettingae)).